A 437-amino-acid polypeptide reads, in one-letter code: UDP-N-acetylmuramate--L-alanine ligase (437 aa).

108-114 lines the ATP pocket; the sequence is GAHGKTS.

The protein belongs to the MurCDEF family.

The protein localises to the cytoplasm. It carries out the reaction UDP-N-acetyl-alpha-D-muramate + L-alanine + ATP = UDP-N-acetyl-alpha-D-muramoyl-L-alanine + ADP + phosphate + H(+). The protein operates within cell wall biogenesis; peptidoglycan biosynthesis. Cell wall formation. The protein is UDP-N-acetylmuramate--L-alanine ligase of Staphylococcus aureus (strain COL).